Consider the following 90-residue polypeptide: MAVKIRLKRMGAKKSPFYRIVVADSRSPRDGRFIETVGTYNPVAKPAEVKIDEELALKWLQTGAKPSDTVRNLFSSQGIMEKFHNAKQGK.

The protein belongs to the bacterial ribosomal protein bS16 family. In terms of assembly, part of the 30S ribosomal subunit.

The sequence is that of Small ribosomal subunit protein bS16 from Bacillus subtilis (strain 168).